Here is a 214-residue protein sequence, read N- to C-terminus: Large ribosomal subunit protein uL16-like (214 aa).

This sequence belongs to the universal ribosomal protein uL16 family. Component of the 60S large ribosomal subunit (LSU).

The protein localises to the cytoplasm. Functionally, testis-specific component of the ribosome, which is required for the transition from prophase to metaphase in male meiosis I. Compensates for the inactivated X-linked RPL10 paralog during spermatogenesis. The ribosome is a large ribonucleoprotein complex responsible for the synthesis of proteins in the cell. The small ribosomal subunit (SSU) binds messenger RNAs (mRNAs) and translates the encoded message by selecting cognate aminoacyl-transfer RNA (tRNA) molecules. The large subunit (LSU) contains the ribosomal catalytic site termed the peptidyl transferase center (PTC), which catalyzes the formation of peptide bonds, thereby polymerizing the amino acids delivered by tRNAs into a polypeptide chain. The nascent polypeptides leave the ribosome through a tunnel in the LSU and interact with protein factors that function in enzymatic processing, targeting, and the membrane insertion of nascent chains at the exit of the ribosomal tunnel. This is Large ribosomal subunit protein uL16-like (RPL10L) from Bos taurus (Bovine).